A 395-amino-acid chain; its full sequence is Chalcone synthase 1 (395 aa).

Val2 is subject to N-acetylvaline. Cys169 is an active-site residue.

Belongs to the thiolase-like superfamily. Chalcone/stilbene synthases family.

The enzyme catalyses (E)-4-coumaroyl-CoA + 3 malonyl-CoA + 3 H(+) = 2',4,4',6'-tetrahydroxychalcone + 3 CO2 + 4 CoA. It functions in the pathway secondary metabolite biosynthesis; flavonoid biosynthesis. In terms of biological role, the primary product of this enzyme is 4,2',4',6'-tetrahydroxychalcone (also termed naringenin-chalcone or chalcone) which can under specific conditions spontaneously isomerize into naringenin. This chain is Chalcone synthase 1 (CHS1), found in Sinapis alba (White mustard).